The sequence spans 406 residues: Protein translocase subunit SecD (406 aa).

Transmembrane regions (helical) follow at residues 8–28 (IVIL…NPIN), 240–260 (MAAM…YRVA), 262–282 (FVAD…MCAI), 289–309 (PGIA…VIIF), 334–354 (FPAI…LFFF), and 361–381 (GFAV…IFIT).

Belongs to the SecD/SecF family. SecD subfamily. Forms a complex with SecF. Part of the essential Sec protein translocation apparatus which comprises SecA, SecYEG and auxiliary proteins SecDF. Other proteins may also be involved.

The protein resides in the cell inner membrane. Part of the Sec protein translocase complex. Interacts with the SecYEG preprotein conducting channel. SecDF uses the proton motive force (PMF) to complete protein translocation after the ATP-dependent function of SecA. The sequence is that of Protein translocase subunit SecD from Sebaldella termitidis (strain ATCC 33386 / NCTC 11300).